The following is a 618-amino-acid chain: Chaperone protein dnaK (618 aa).

The disordered stretch occupies residues 595 to 618 (SKTETTTPNKNEEDVIDASFSEEK).

The protein belongs to the heat shock protein 70 family.

Its subcellular location is the plastid. The protein localises to the cyanelle. Acts as a chaperone. This chain is Chaperone protein dnaK (dnaK-A), found in Cyanophora paradoxa.